The sequence spans 573 residues: Putative adenine deaminase PTO1085 (573 aa).

The protein belongs to the metallo-dependent hydrolases superfamily. Adenine deaminase family.

It catalyses the reaction adenine + H2O + H(+) = hypoxanthine + NH4(+). The protein is Putative adenine deaminase PTO1085 of Picrophilus torridus (strain ATCC 700027 / DSM 9790 / JCM 10055 / NBRC 100828 / KAW 2/3).